Consider the following 272-residue polypeptide: Orotidine 5'-phosphate decarboxylase (272 aa).

Residue Lys96 is the Proton donor of the active site.

It belongs to the OMP decarboxylase family. Type 2 subfamily.

It catalyses the reaction orotidine 5'-phosphate + H(+) = UMP + CO2. The protein operates within pyrimidine metabolism; UMP biosynthesis via de novo pathway; UMP from orotate: step 2/2. This is Orotidine 5'-phosphate decarboxylase from Christiangramia forsetii (strain DSM 17595 / CGMCC 1.15422 / KT0803) (Gramella forsetii).